We begin with the raw amino-acid sequence, 48 residues long: Phospholipase A2 superbin d (48 aa).

Ca(2+)-binding residues include Tyr-28, Gly-30, and Gly-32. A disulfide bond links Cys-29 and Cys-45. His-48 is an active-site residue.

The cofactor is Ca(2+). As to expression, expressed by the venom gland.

The protein resides in the secreted. The enzyme catalyses a 1,2-diacyl-sn-glycero-3-phosphocholine + H2O = a 1-acyl-sn-glycero-3-phosphocholine + a fatty acid + H(+). Functionally, snake venom phospholipase A2 (PLA2) that inhibits collagen-induced platelet aggregation. In terms of inhibition of platelet aggregation, superbin d is less potent as superbin a, b, and c. PLA2 catalyzes the calcium-dependent hydrolysis of the 2-acyl groups in 3-sn-phosphoglycerides. This chain is Phospholipase A2 superbin d, found in Austrelaps superbus (Lowland copperhead snake).